A 410-amino-acid polypeptide reads, in one-letter code: LL-diaminopimelate aminotransferase (410 aa).

Residues Tyr15 and Gly42 each coordinate substrate. Pyridoxal 5'-phosphate contacts are provided by residues Tyr72, Ala108–Lys109, Tyr132, Asn188, Tyr219, and Ser247–Ser249. Residues Lys109, Tyr132, and Asn188 each contribute to the substrate site. Lys250 carries the post-translational modification N6-(pyridoxal phosphate)lysine. Pyridoxal 5'-phosphate-binding residues include Arg258 and Asn293. 2 residues coordinate substrate: Asn293 and Arg389.

It belongs to the class-I pyridoxal-phosphate-dependent aminotransferase family. LL-diaminopimelate aminotransferase subfamily. As to quaternary structure, homodimer. It depends on pyridoxal 5'-phosphate as a cofactor.

It catalyses the reaction (2S,6S)-2,6-diaminopimelate + 2-oxoglutarate = (S)-2,3,4,5-tetrahydrodipicolinate + L-glutamate + H2O + H(+). The protein operates within amino-acid biosynthesis; L-lysine biosynthesis via DAP pathway; LL-2,6-diaminopimelate from (S)-tetrahydrodipicolinate (aminotransferase route): step 1/1. Functionally, involved in the synthesis of meso-diaminopimelate (m-DAP or DL-DAP), required for both lysine and peptidoglycan biosynthesis. Catalyzes the direct conversion of tetrahydrodipicolinate to LL-diaminopimelate. The protein is LL-diaminopimelate aminotransferase of Bacteroides thetaiotaomicron (strain ATCC 29148 / DSM 2079 / JCM 5827 / CCUG 10774 / NCTC 10582 / VPI-5482 / E50).